A 477-amino-acid chain; its full sequence is Tripartite motif-containing protein 72 (477 aa).

Cysteine 14, cysteine 17, cysteine 29, histidine 31, cysteine 34, cysteine 37, cysteine 53, cysteine 56, cysteine 86, histidine 89, cysteine 97, aspartate 100, cysteine 105, cysteine 108, histidine 114, and histidine 117 together coordinate Zn(2+). The RING-type zinc-finger motif lies at 14-57; it reads CPLCLQLFDAPVTAECGHSFCRACLSRVAGEPAADGTVNCPCCQ. A B box-type zinc finger spans residues 81-122; sequence VPQGHCEEHLDPLSIYCEQDRVLVCGVCASLGSHRGHRLLPA. Residues 135–232 are a coiled coil; that stretch reads QQKLQLQEAS…EKVLEEVADK (98 aa). Residue serine 255 is modified to Phosphoserine. In terms of domain architecture, B30.2/SPRY spans 271–475; it reads DFKFQVWRKM…PLLLVGPDGQ (205 aa).

The protein belongs to the TRIM/RBCC family. Homodimer. Homooligomer; disulfide-linked. Oligomerizes on the phospholipid membrane. Interacts with DYSF and CAV3. Disulfide bond formation at Cys-242 occurs in case of membrane damage that cause the entry of the oxidized milieu of the extracellular space, resulting in homooligomerization. As to expression, muscle-specific.

The protein localises to the cell membrane. It localises to the sarcolemma. Its subcellular location is the cytoplasmic vesicle membrane. The enzyme catalyses S-ubiquitinyl-[E2 ubiquitin-conjugating enzyme]-L-cysteine + [acceptor protein]-L-lysine = [E2 ubiquitin-conjugating enzyme]-L-cysteine + N(6)-ubiquitinyl-[acceptor protein]-L-lysine.. Its pathway is protein modification; protein ubiquitination. Its activity is regulated as follows. Specifically binds phosphatidylserine. The binding to phospholipids enhances ubiquitination activity. In terms of biological role, muscle-specific E3 ubiquitin-protein ligase that plays a central role in cell membrane repair by nucleating the assembly of the repair machinery at injury sites. Its ubiquitination activity is mediated by E2 ubiquitin-conjugating enzymes UBE2D1, UBE2D2 and UBE2D3. Acts as a sensor of oxidation: upon membrane damage, entry of extracellular oxidative environment results in disulfide bond formation and homooligomerization at the injury site. This oligomerization acts as a nucleation site for recruitment of TRIM72-containing vesicles to the injury site, leading to membrane patch formation. Probably acts upstream of the Ca(2+)-dependent membrane resealing process. Required for transport of DYSF to sites of cell injury during repair patch formation. Regulates membrane budding and exocytosis. May be involved in the regulation of the mobility of KCNB1-containing endocytic vesicles. In Oryctolagus cuniculus (Rabbit), this protein is Tripartite motif-containing protein 72.